Consider the following 362-residue polypeptide: Patr class I histocompatibility antigen, A-5 alpha chain (362 aa).

A signal peptide spans M1–A24. Residues G25–A114 are alpha-1. The Extracellular segment spans residues G25–I308. N-linked (GlcNAc...) asparagine glycosylation occurs at N110. The tract at residues G115–A206 is alpha-2. 2 disulfides stabilise this stretch: C125/C188 and C227/C283. The segment at D207–W298 is alpha-3. Residues P209 to T295 enclose the Ig-like C1-type domain. The segment at E299–I308 is connecting peptide. Residues V309–C332 traverse the membrane as a helical segment. Residues R333–A362 lie on the Cytoplasmic side of the membrane. The segment at S336–A362 is disordered. At S343 the chain carries Phosphoserine. A compositionally biased stretch (low complexity) spans S343–A362. Y344 is subject to Phosphotyrosine. A phosphoserine mark is found at S345, S349, S350, S352, S356, and S359.

This sequence belongs to the MHC class I family. Heterodimer of an alpha chain and a beta chain (beta-2-microglobulin).

Its subcellular location is the membrane. Involved in the presentation of foreign antigens to the immune system. The chain is Patr class I histocompatibility antigen, A-5 alpha chain from Pan troglodytes (Chimpanzee).